Reading from the N-terminus, the 490-residue chain is Subtilisin-like protease 8 (490 aa).

The signal sequence occupies residues M1–Q26. Positions N27–T134 are excised as a propeptide. Positions S43 to T134 constitute an Inhibitor I9 domain. In terms of domain architecture, Peptidase S8 spans P144–I450. Residues D180 and H212 each act as charge relay system in the active site. N282 carries N-linked (GlcNAc...) asparagine glycosylation. The Charge relay system role is filled by S378. An N-linked (GlcNAc...) asparagine glycan is attached at N456.

It belongs to the peptidase S8 family.

The protein localises to the secreted. Secreted subtilisin-like serine protease with keratinolytic activity that contributes to pathogenicity. The chain is Subtilisin-like protease 8 (SUB8) from Arthroderma benhamiae (strain ATCC MYA-4681 / CBS 112371) (Trichophyton mentagrophytes).